We begin with the raw amino-acid sequence, 132 residues long: Mini-ribonuclease 3 (132 aa).

Aspartate 17 is an active-site residue.

Belongs to the MrnC RNase family. Homodimer. Mg(2+) is required as a cofactor.

Its subcellular location is the cytoplasm. Involved in correct processing of both the 5' and 3' ends of 23S rRNA precursor. Processes 30S rRNA precursor transcript even in absence of ribonuclease 3 (Rnc); Rnc processes 30S rRNA into smaller rRNA precursors. This Enterococcus faecalis (strain ATCC 700802 / V583) protein is Mini-ribonuclease 3.